Reading from the N-terminus, the 156-residue chain is WASQVSENRPVCKAIIQGKQFEGLVDTGADVSIIALNQWPKNWPKQKAVTGLVGVGTASEVYQSTEILHCLGPDNQESTVQPMITSIPLNLWGRDLLQQWGAEITMPAPLYSPTSQKIMTKMGYIPGKGLGKNEDGIKIPVEAKINQKREGIGYPF.

Residues 21 to 96 (FEGLVDTGAD…IPLNLWGRDL (76 aa)) form the Peptidase A2 domain. Residue D26 is part of the active site. A G-patch domain is found at 111-156 (YSPTSQKIMTKMGYIPGKGLGKNEDGIKIPVEAKINQKREGIGYPF).

It belongs to the peptidase A2 family. HERV class-II K(HML-2) subfamily. In terms of assembly, active as a homodimer. Post-translationally, autoproteolytically processed at the N-terminus. Expected C-terminal autoprocessing not detected. The sequence shown is that of the processed Pro protein.

It catalyses the reaction Processing at the authentic HIV-1 PR recognition site and release of the mature p17 matrix and the p24 capsid protein, as a result of the cleavage of the -SQNY-|-PIVQ- cleavage site.. Its function is as follows. Retroviral proteases have roles in processing of the primary translation products and the maturation of the viral particle. Endogenous Pro proteins may have kept, lost or modified their original function during evolution. This endogenous protein has retained most of the characteristics of retroviral proteases. The polypeptide is Endogenous retrovirus group K member 25 Pro protein (ERVK-25) (Homo sapiens (Human)).